Here is a 531-residue protein sequence, read N- to C-terminus: MAAIKIANPGAEVTRSQAALAVNICAARGLQDVLRPTLGPKGALKMLVSGAGDIKLTKDGNVLLHEMQIQHPTASIIAKVAAAQDHVTGDGTTSNVLIIGELLKQADLYISEGLHPRIITEGFDVAKTKALEVLDEIKVQKEMKREILLDVARTSLQTKVHAELADILTEAVVDSVLAIRRPGVPIDLFMVEIVEMRHKSETDTQLIRGLVLDHGARHPRMRKQVRDAYILTCNVSLEYEKTEVSSGFFYKTVEEKEKLVKAERKFIEDRVQKIIDLKQKVCAESNKGFVVINQKGIDPVSLEMLAKHNIVALRRAKRRNLERLTLACGGLAVNSFEGLSEECLGHAGLVFEYALGEEKFTFIEDCVNPLSVTLLVKGPNKHTLIQIKDALRDGLRAVKNAIEDGCVVPGAGAVEVAIAEALVNYKHRVQGRVRLGIQAFADALLIIPKVLAQNSGYDLQETLIKIQTKHAESKELLGIDLNTGEPMAAAEAGIWDNYCVKKHLLHSCTVIATNILLVDEIMRAGMSSLRD.

This sequence belongs to the TCP-1 chaperonin family. As to quaternary structure, component of the chaperonin-containing T-complex (TRiC), a heterooligomeric complex of about 850 to 900 kDa that forms two stacked rings, 12 to 16 nm in diameter. In terms of tissue distribution, testis specific.

It localises to the cytoplasm. Component of the chaperonin-containing T-complex (TRiC), a molecular chaperone complex that assists the folding of proteins upon ATP hydrolysis. This is T-complex protein 1 subunit zeta-2 (Cct6b) from Mus musculus (Mouse).